The primary structure comprises 464 residues: Soluble pyridine nucleotide transhydrogenase (464 aa).

D35–C44 contributes to the FAD binding site.

The protein belongs to the class-I pyridine nucleotide-disulfide oxidoreductase family. FAD serves as cofactor.

It localises to the cytoplasm. It catalyses the reaction NAD(+) + NADPH = NADH + NADP(+). Its function is as follows. Conversion of NADPH, generated by peripheral catabolic pathways, to NADH, which can enter the respiratory chain for energy generation. The chain is Soluble pyridine nucleotide transhydrogenase from Pseudomonas aeruginosa (strain LESB58).